A 482-amino-acid chain; its full sequence is Glutamyl-tRNA(Gln) amidotransferase subunit A (482 aa).

Catalysis depends on charge relay system residues Lys-75 and Ser-150. The active-site Acyl-ester intermediate is the Ser-174.

This sequence belongs to the amidase family. GatA subfamily. Heterotrimer of A, B and C subunits.

The catalysed reaction is L-glutamyl-tRNA(Gln) + L-glutamine + ATP + H2O = L-glutaminyl-tRNA(Gln) + L-glutamate + ADP + phosphate + H(+). Its function is as follows. Allows the formation of correctly charged Gln-tRNA(Gln) through the transamidation of misacylated Glu-tRNA(Gln) in organisms which lack glutaminyl-tRNA synthetase. The reaction takes place in the presence of glutamine and ATP through an activated gamma-phospho-Glu-tRNA(Gln). The sequence is that of Glutamyl-tRNA(Gln) amidotransferase subunit A from Deinococcus radiodurans (strain ATCC 13939 / DSM 20539 / JCM 16871 / CCUG 27074 / LMG 4051 / NBRC 15346 / NCIMB 9279 / VKM B-1422 / R1).